Here is a 351-residue protein sequence, read N- to C-terminus: Beta-hexosaminidase (351 aa).

Substrate contacts are provided by residues D62, R70, R133, and 163–164 (KH). H176 serves as the catalytic Proton donor/acceptor. Catalysis depends on D248, which acts as the Nucleophile.

The protein belongs to the glycosyl hydrolase 3 family. NagZ subfamily. Monomer.

The protein resides in the cytoplasm. The enzyme catalyses Hydrolysis of terminal non-reducing N-acetyl-D-hexosamine residues in N-acetyl-beta-D-hexosaminides.. The protein operates within cell wall biogenesis; peptidoglycan recycling. Functionally, plays a role in peptidoglycan recycling by cleaving the terminal beta-1,4-linked N-acetylglucosamine (GlcNAc) from peptide-linked peptidoglycan fragments, giving rise to free GlcNAc, anhydro-N-acetylmuramic acid and anhydro-N-acetylmuramic acid-linked peptides. This chain is Beta-hexosaminidase, found in Haemophilus influenzae (strain ATCC 51907 / DSM 11121 / KW20 / Rd).